The sequence spans 199 residues: Holliday junction branch migration complex subunit RuvA (199 aa).

Residues 1 to 64 (MIGRLRGILL…DDAHLLYAFA (64 aa)) form a domain I region. The tract at residues 65-143 (SEKERGLFRS…DMPESGVAGM (79 aa)) is domain II. Residues 144–150 (RPDRVDG) are flexible linker. A domain III region spans residues 151–199 (SAPGTVAEAVSALVALGYKPNEASRAVRRLDTEALTTEEIIRQALQRML).

The protein belongs to the RuvA family. As to quaternary structure, homotetramer. Forms an RuvA(8)-RuvB(12)-Holliday junction (HJ) complex. HJ DNA is sandwiched between 2 RuvA tetramers; dsDNA enters through RuvA and exits via RuvB. An RuvB hexamer assembles on each DNA strand where it exits the tetramer. Each RuvB hexamer is contacted by two RuvA subunits (via domain III) on 2 adjacent RuvB subunits; this complex drives branch migration. In the full resolvosome a probable DNA-RuvA(4)-RuvB(12)-RuvC(2) complex forms which resolves the HJ.

Its subcellular location is the cytoplasm. In terms of biological role, the RuvA-RuvB-RuvC complex processes Holliday junction (HJ) DNA during genetic recombination and DNA repair, while the RuvA-RuvB complex plays an important role in the rescue of blocked DNA replication forks via replication fork reversal (RFR). RuvA specifically binds to HJ cruciform DNA, conferring on it an open structure. The RuvB hexamer acts as an ATP-dependent pump, pulling dsDNA into and through the RuvAB complex. HJ branch migration allows RuvC to scan DNA until it finds its consensus sequence, where it cleaves and resolves the cruciform DNA. In Nitrosococcus oceani (strain ATCC 19707 / BCRC 17464 / JCM 30415 / NCIMB 11848 / C-107), this protein is Holliday junction branch migration complex subunit RuvA.